We begin with the raw amino-acid sequence, 176 residues long: Probable DNA-directed RNA polymerase subunit delta (176 aa).

One can recognise an HTH HARE-type domain in the interval 14–81 (CSMIEVVHSV…GENRWGLRSW (68 aa)). The interval 90–176 (EILPQPKPKK…ETEEEEEEEL (87 aa)) is disordered. Over residues 106 to 176 (DGFDDYIEED…ETEEEEEEEL (71 aa)) the composition is skewed to acidic residues.

This sequence belongs to the RpoE family. RNAP is composed of a core of 2 alpha, a beta and a beta' subunits. The core is associated with a delta subunit and one of several sigma factors.

Participates in both the initiation and recycling phases of transcription. In the presence of the delta subunit, RNAP displays an increased specificity of transcription, a decreased affinity for nucleic acids, and an increased efficiency of RNA synthesis because of enhanced recycling. This chain is Probable DNA-directed RNA polymerase subunit delta, found in Bacillus thuringiensis subsp. konkukian (strain 97-27).